Consider the following 332-residue polypeptide: Gibberellin 2-beta-dioxygenase (332 aa).

Residues 175-280 (KSDSCFRLNH…RLSMIYFGGP (106 aa)) form the Fe2OG dioxygenase domain. Residues His-204, Asp-206, and His-261 each coordinate Fe cation. Arg-271 is an active-site residue.

It belongs to the iron/ascorbate-dependent oxidoreductase family. GA2OX subfamily. It depends on Fe cation as a cofactor.

The catalysed reaction is gibberellin A1 + 2-oxoglutarate + O2 = gibberellin A8 + succinate + CO2. It participates in plant hormone biosynthesis; gibberellin biosynthesis. Its function is as follows. Catalyzes the 2-beta-hydroxylation of several biologically active gibberellins, leading to the homeostatic regulation of their endogenous level. Catabolism of gibberellins (GAs) plays a central role in plant development. Converts GA9/GA20 to GA51/GA29 and GA4/GA1 to GA34/GA8. The chain is Gibberellin 2-beta-dioxygenase (GA2OX1) from Phaseolus coccineus (Scarlet runner bean).